We begin with the raw amino-acid sequence, 208 residues long: Proteasome subunit beta 2 (208 aa).

The propeptide at 1-14 is removed in mature form; by autocatalysis; that stretch reads MGNELQLENKILKG. Catalysis depends on threonine 15, which acts as the Nucleophile.

Belongs to the peptidase T1B family. As to quaternary structure, the 20S proteasome core is composed of 14 alpha and 14 beta subunits that assemble into four stacked heptameric rings, resulting in a barrel-shaped structure. The two inner rings, each composed of seven catalytic beta subunits, are sandwiched by two outer rings, each composed of seven alpha subunits. The catalytic chamber with the active sites is on the inside of the barrel. Has a gated structure, the ends of the cylinder being occluded by the N-termini of the alpha-subunits. Is capped at one or both ends by the proteasome regulatory ATPase, PAN.

It localises to the cytoplasm. The catalysed reaction is Cleavage of peptide bonds with very broad specificity.. Its activity is regulated as follows. The formation of the proteasomal ATPase PAN-20S proteasome complex, via the docking of the C-termini of PAN into the intersubunit pockets in the alpha-rings, triggers opening of the gate for substrate entry. Interconversion between the open-gate and close-gate conformations leads to a dynamic regulation of the 20S proteasome proteolysis activity. Functionally, component of the proteasome core, a large protease complex with broad specificity involved in protein degradation. The sequence is that of Proteasome subunit beta 2 from Saccharolobus solfataricus (strain ATCC 35092 / DSM 1617 / JCM 11322 / P2) (Sulfolobus solfataricus).